A 596-amino-acid chain; its full sequence is Inactive metallocarboxypeptidase ECM14 (596 aa).

The N-terminal stretch at 1–22 (MHFSVRLSLFLTLASSLPLVSA) is a signal peptide. The propeptide occupies 23-184 (VPQHEDQAYT…QTIYESYPKA (162 aa)). The interval 182–211 (PKAGSASPSQQGPTTRRFSPSASTSKSKPH) is disordered. Residues 187 to 207 (ASPSQQGPTTRRFSPSASTSK) are compositionally biased toward polar residues. The 327-residue stretch at 220-546 (DYQPLSVLLP…RAMVAMGKFL (327 aa)) folds into the Peptidase M14 domain. Zn(2+) contacts are provided by His285 and Glu288. Substrate contacts are provided by residues 285 to 288 (HARE), Arg343, and 360 to 361 (DH). The cysteines at positions 354 and 377 are disulfide-linked. N-linked (GlcNAc...) asparagine glycosylation is present at Asn370. His417 is a Zn(2+) binding site. 418–419 (SY) is a substrate binding site. Residues 557-596 (DGLRASEEPQDYDNDLEDGEDDKDEQGSTVFRAQADDLQS) are disordered. Over residues 564 to 580 (EPQDYDNDLEDGEDDKD) the composition is skewed to acidic residues. A compositionally biased stretch (polar residues) spans 583 to 596 (GSTVFRAQADDLQS).

The protein belongs to the peptidase M14 family. The cofactor is Zn(2+).

The protein resides in the vacuole. Its subcellular location is the secreted. Inactive carboxypeptidase that may play a role in cell wall organization and biogenesis. This Arthroderma benhamiae (strain ATCC MYA-4681 / CBS 112371) (Trichophyton mentagrophytes) protein is Inactive metallocarboxypeptidase ECM14 (ECM14).